The following is a 111-amino-acid chain: Resistin-like gamma (111 aa).

Positions 1–23 are cleaved as a signal peptide; that stretch reads MKTAICSLLICIFLLQLMVPVNT. 5 disulfide bridges follow: cysteine 55/cysteine 108, cysteine 67/cysteine 107, cysteine 76/cysteine 93, cysteine 78/cysteine 95, and cysteine 82/cysteine 97.

It belongs to the resistin/FIZZ family. Homodimer. Heterodimer with RETNLB. Highly expressed in bone marrow, spleen and white blood cells. Also detected at low levels in thymus, lung, trachea, white adipose tissue, nasal respiratory epithelium, colon, small intestine, kidney, liver, and heart.

The protein resides in the secreted. Functionally, probable hormone. Promotes chemotaxis in myeloid cells. In Rattus norvegicus (Rat), this protein is Resistin-like gamma.